The primary structure comprises 198 residues: MHYPEPITKLMDSFMKLPGIGPKSAARLAFYVLDMKEDDVLDFAKALVDAKRNLSFCSVCGHITDKDPCYICSDTSRDRSVICVVQESKDVIAMEKMRDFHGLYHVLHGTISPMDGIGPEDINIPDLLKRLQDDTIEEVILATNPNVEGEATAMYISRLLRPSGIKVTRIAHGLPVGGDLEYADEVTLSKAMEGRREV.

The C4-type zinc-finger motif lies at 57 to 72; that stretch reads CSVCGHITDKDPCYIC. A Toprim domain is found at 80 to 175; that stretch reads SVICVVQESK…KVTRIAHGLP (96 aa).

It belongs to the RecR family.

Functionally, may play a role in DNA repair. It seems to be involved in an RecBC-independent recombinational process of DNA repair. It may act with RecF and RecO. This Listeria welshimeri serovar 6b (strain ATCC 35897 / DSM 20650 / CCUG 15529 / CIP 8149 / NCTC 11857 / SLCC 5334 / V8) protein is Recombination protein RecR.